Here is a 96-residue protein sequence, read N- to C-terminus: Probable quinol oxidase subunit 4 (96 aa).

The next 3 helical transmembrane spans lie at 8–28 (TVGF…TLYT), 37–57 (TIIF…FMHL), and 68–88 (FKVI…YWVM).

This sequence belongs to the cytochrome c oxidase bacterial subunit 4 family.

The protein resides in the cell membrane. It carries out the reaction 2 a quinol + O2 = 2 a quinone + 2 H2O. In terms of biological role, catalyzes quinol oxidation with the concomitant reduction of oxygen to water. The sequence is that of Probable quinol oxidase subunit 4 (qoxD) from Staphylococcus haemolyticus (strain JCSC1435).